Reading from the N-terminus, the 1699-residue chain is Eukaryotic translation initiation factor 2-alpha kinase gcn-2 (1699 aa).

Residues 22–138 (EEKLALDAVY…HRVREFLTDH (117 aa)) form the RWD domain. 2 Protein kinase domains span residues 108 to 507 (LTIL…DVVL) and 508 to 999 (VRNK…DEDL). ATP-binding positions include 114 to 122 (MADTWEGCV), Lys-154, 497 to 505 (LGRGGFGDV), and Lys-520. 2 disordered regions span residues 572-615 (DSSL…SLMP) and 632-725 (KEWS…SVFE). Acidic residues predominate over residues 669–706 (SSDDEDDDDSSEIDWDAESEEVEDEESDDSDEEDEDDG). The segment covering 711-720 (QLNTETSTGA) has biased composition (polar residues). Asp-829 (proton acceptor) is an active-site residue.

The protein belongs to the protein kinase superfamily. Ser/Thr protein kinase family. GCN2 subfamily.

The enzyme catalyses L-seryl-[protein] + ATP = O-phospho-L-seryl-[protein] + ADP + H(+). The catalysed reaction is L-threonyl-[protein] + ATP = O-phospho-L-threonyl-[protein] + ADP + H(+). Functionally, serine/threonine-protein kinase which phosphorylates the alpha subunit of eukaryotic translation-initiation factor 2 (eIF2alpha), leading to its inactivation and thus to a rapid reduction of translational initiation and repression of global protein synthesis. Involved in the unfolded protein response (UPR) triggered by several stresses including mitochondrial, osmotic and oxidative stresses, amino acid deprivation and UV irradiation, probably by phosphorylating and inhibiting eIF2alpha. In addition, leads to the selective translation/transcription of some mRNA including atf-5, pha-4 and gpdh-1 which are part of the UPR. Required for maintaining lifespan during amino acid starvation. Involved in hypoxia-mediated adaptive protective response. In Caenorhabditis elegans, this protein is Eukaryotic translation initiation factor 2-alpha kinase gcn-2.